A 172-amino-acid chain; its full sequence is Adenine phosphoribosyltransferase (172 aa).

It belongs to the purine/pyrimidine phosphoribosyltransferase family. In terms of assembly, homodimer.

The protein resides in the cytoplasm. The catalysed reaction is AMP + diphosphate = 5-phospho-alpha-D-ribose 1-diphosphate + adenine. The protein operates within purine metabolism; AMP biosynthesis via salvage pathway; AMP from adenine: step 1/1. In terms of biological role, catalyzes a salvage reaction resulting in the formation of AMP, that is energically less costly than de novo synthesis. This is Adenine phosphoribosyltransferase from Lactiplantibacillus plantarum (strain ATCC BAA-793 / NCIMB 8826 / WCFS1) (Lactobacillus plantarum).